The chain runs to 347 residues: S-adenosylmethionine:tRNA ribosyltransferase-isomerase (347 aa).

The protein belongs to the QueA family. In terms of assembly, monomer.

The protein resides in the cytoplasm. The enzyme catalyses 7-aminomethyl-7-carbaguanosine(34) in tRNA + S-adenosyl-L-methionine = epoxyqueuosine(34) in tRNA + adenine + L-methionine + 2 H(+). It functions in the pathway tRNA modification; tRNA-queuosine biosynthesis. Transfers and isomerizes the ribose moiety from AdoMet to the 7-aminomethyl group of 7-deazaguanine (preQ1-tRNA) to give epoxyqueuosine (oQ-tRNA). The protein is S-adenosylmethionine:tRNA ribosyltransferase-isomerase of Halalkalibacterium halodurans (strain ATCC BAA-125 / DSM 18197 / FERM 7344 / JCM 9153 / C-125) (Bacillus halodurans).